Here is a 176-residue protein sequence, read N- to C-terminus: Nucleoside triphosphate/diphosphate phosphatase (176 aa).

R23 functions as the Proton donor in the catalytic mechanism. N87, D103, D105, D107, D120, and E123 together coordinate Mg(2+).

Belongs to the Ntdp family. Mg(2+) serves as cofactor.

The catalysed reaction is a ribonucleoside 5'-triphosphate + H2O = a ribonucleoside 5'-diphosphate + phosphate + H(+). It catalyses the reaction a ribonucleoside 5'-diphosphate + H2O = a ribonucleoside 5'-phosphate + phosphate + H(+). Has nucleoside phosphatase activity towards nucleoside triphosphates and nucleoside diphosphates. The protein is Nucleoside triphosphate/diphosphate phosphatase of Bacillus cytotoxicus (strain DSM 22905 / CIP 110041 / 391-98 / NVH 391-98).